A 358-amino-acid polypeptide reads, in one-letter code: Leukotriene B4 receptor 2 (358 aa).

Topologically, residues 1–24 (MSVCYRPPGNETLLSWKGSRATGT) are extracellular. N10 is a glycosylation site (N-linked (GlcNAc...) asparagine). A helical membrane pass occupies residues 25 to 45 (AFLLLAALLGLPGNGFVVWSL). At 46 to 60 (AGWRPTAGRPLAATL) the chain is on the cytoplasmic side. A helical membrane pass occupies residues 61 to 81 (VLHLALADGAVLLLTPLFVAF). Over 82–96 (LSRQAWPLGQVGCKA) the chain is Extracellular. A helical membrane pass occupies residues 97-117 (VYYVCALSMYASVLLTGLLSL). At 118–140 (QRCLAVTRPFLAPRLRSPALARR) the chain is on the cytoplasmic side. A helical membrane pass occupies residues 141-161 (LLLGVWLAALVLAVPAAVYRH). Residues 162-185 (LWGDRVCQLCHPSAVHAAAHLSLE) are Extracellular-facing. Residues 186–206 (TLTAFVLPFGTVLGCYGVTLA) traverse the membrane as a helical segment. Residues 207–225 (RLRGARWGSGRQGTRVGRL) are Cytoplasmic-facing. The chain crosses the membrane as a helical span at residues 226-246 (VSAIVLAFGLLWAPYHAVNLL). Over 247–275 (QAVAALAPPEGPLARLGGAGQAARAGTTA) the chain is Extracellular. The helical transmembrane segment at 276–296 (LAFFSSSVNPVLYVFTAGDLL) threads the bilayer. At 297 to 358 (PRAGPRFLTR…GRMEKDSQEW (62 aa)) the chain is on the cytoplasmic side. The tract at residues 315–358 (RVGSRSREGTMELRTTPRLKVVGQGRGYGDPGGGGRMEKDSQEW) is disordered. Over residues 338-349 (QGRGYGDPGGGG) the composition is skewed to gly residues.

The protein belongs to the G-protein coupled receptor 1 family.

It localises to the cell membrane. Low-affinity receptor for leukotrienes including leukotriene B4. Mediates chemotaxis of granulocytes and macrophages. The response is mediated via G-proteins that activate a phosphatidylinositol-calcium second messenger system. This chain is Leukotriene B4 receptor 2 (Ltb4r2), found in Rattus norvegicus (Rat).